The following is an 847-amino-acid chain: Glucans biosynthesis glucosyltransferase H (847 aa).

Residues 1-139 lie on the Cytoplasmic side of the membrane; it reads MNKTTEYIDA…WRTVGTIRRY (139 aa). The helical transmembrane segment at 140 to 160 threads the bilayer; that stretch reads ILLILTLAQTVVATWYMKTIL. Over 161-193 the chain is Periplasmic; sequence PYQGWALINPMDMVGQDLWVSFMQLLPYMLQTG. Residues 194–214 traverse the membrane as a helical segment; the sequence is ILILFAVLFCWVSAGFWTALM. The Cytoplasmic portion of the chain corresponds to 215 to 512; it reads GFLQLLIGRD…VKGMHPVHRA (298 aa). Residues 513-533 form a helical membrane-spanning segment; the sequence is VFLTGVMSYLSAPLWFMFLAL. The Periplasmic segment spans residues 534–569; the sequence is STALQVVHALTEPQYFLQPRQLFPVWPQWRPELAIA. The chain crosses the membrane as a helical span at residues 570–590; it reads LFASTMVLLFLPKLLSILLIW. At 591-602 the chain is on the cytoplasmic side; the sequence is CKGTKEYGGFWR. The helical transmembrane segment at 603-625 threads the bilayer; it reads VTLSLLLEVLFSVLLAPVRMLFH. Topologically, residues 626-679 are periplasmic; that stretch reads TVFVVSAFLGWEVVWNSPQRDDDSTSWGEAFKRHGSQLLLGLVWAVGMAWLDLR. A helical transmembrane segment spans residues 680-700; it reads FLFWLAPIVFSLILSPFVSVI. Topologically, residues 701–847 are cytoplasmic; sequence SSRATVGLRT…ALRKPDAASQ (147 aa).

The protein belongs to the glycosyltransferase 2 family. OpgH subfamily.

Its subcellular location is the cell inner membrane. The protein operates within glycan metabolism; osmoregulated periplasmic glucan (OPG) biosynthesis. Its function is as follows. Involved in the biosynthesis of osmoregulated periplasmic glucans (OPGs). In Shigella flexneri, this protein is Glucans biosynthesis glucosyltransferase H (mdoH).